Reading from the N-terminus, the 579-residue chain is Adenine/guanine permease AZG1 (579 aa).

12 helical membrane-spanning segments follow: residues 52–72 (AGTATFLTMAYILAVNASILS), 131–151 (LIVATVAASLIGCVIMGLMAN), 183–203 (TALAAVFIEGLIFLFISAIGF), 221–241 (AGIGLFLAFIGLQNNQGIGLV), 260–280 (ISLAPVITSANGTVSLLAGGS), 292–312 (MESPTFWLGIVGFVIIAYCLV), 320–340 (IYGIVFVTAVSWFRNTEVTAF), 379–399 (FWEALVTFLYVDILDTTGTLY), 414–434 (FAGQYFAFMSDASAIVIGSLL), 459–479 (AITVAVYFLLAMFFTPLLASI), 480–500 (PAWAVGPPLILVGVMMMKSVT), and 514–534 (FVTMILMPLTYSVAYGLIGGI).

This sequence belongs to the nucleobase:cation symporter-2 (NCS2) (TC 2.A.40) family. Azg-like subfamily.

The protein localises to the membrane. Functionally, transports natural purines (adenine and guanine) as well as purine analogs. Confers sensitivity to 8-azaadenine and 8-azaguanine (8-azg). This is Adenine/guanine permease AZG1 (AZG1) from Arabidopsis thaliana (Mouse-ear cress).